The following is a 72-amino-acid chain: Large ribosomal subunit protein bL31 (72 aa).

Zn(2+) contacts are provided by C17, C19, C37, and C40.

This sequence belongs to the bacterial ribosomal protein bL31 family. Type A subfamily. In terms of assembly, part of the 50S ribosomal subunit. The cofactor is Zn(2+).

Its function is as follows. Binds the 23S rRNA. This is Large ribosomal subunit protein bL31 from Clostridium botulinum (strain Loch Maree / Type A3).